The chain runs to 142 residues: Nucleoside diphosphate kinase (142 aa).

The ATP site is built by lysine 11, phenylalanine 59, arginine 87, threonine 93, arginine 104, and asparagine 114. Histidine 117 (pros-phosphohistidine intermediate) is an active-site residue.

This sequence belongs to the NDK family. As to quaternary structure, homotetramer. Mg(2+) serves as cofactor.

Its subcellular location is the cytoplasm. It carries out the reaction a 2'-deoxyribonucleoside 5'-diphosphate + ATP = a 2'-deoxyribonucleoside 5'-triphosphate + ADP. The enzyme catalyses a ribonucleoside 5'-diphosphate + ATP = a ribonucleoside 5'-triphosphate + ADP. Its function is as follows. Major role in the synthesis of nucleoside triphosphates other than ATP. The ATP gamma phosphate is transferred to the NDP beta phosphate via a ping-pong mechanism, using a phosphorylated active-site intermediate. The protein is Nucleoside diphosphate kinase of Hahella chejuensis (strain KCTC 2396).